A 99-amino-acid polypeptide reads, in one-letter code: UPF0235 protein PM1313 (99 aa).

This sequence belongs to the UPF0235 family.

This Pasteurella multocida (strain Pm70) protein is UPF0235 protein PM1313.